The primary structure comprises 537 residues: Lysosomal cobalamin transport escort protein LMBD1 (537 aa).

The Extracellular portion of the chain corresponds to 1–7; it reads MAAAAAE. A helical transmembrane segment spans residues 8-28; sequence LVIGWCIFGLLLLAILAFCWV. The Cytoplasmic segment spans residues 29-47; it reads YVRKYQSQRESEVVSTVTA. A helical membrane pass occupies residues 48-68; that stretch reads IFSLAVALITSALLPVDIFLV. Topologically, residues 69 to 97 are extracellular; it reads SYMKNQNGTFKDWADANVTVQIENTVLYG. Asn75 and Asn85 each carry an N-linked (GlcNAc...) asparagine glycan. A helical transmembrane segment spans residues 98–118; the sequence is YYTLYSVILFCVFFWIPFVYF. Residues 119-141 lie on the Cytoplasmic side of the membrane; the sequence is YYEEKDEDDASKCTQIKTALKYT. The helical transmembrane segment at 142–162 threads the bilayer; the sequence is LGFVVICALLLLVGAFVPLHL. Residues 163–185 lie on the Extracellular side of the membrane; that stretch reads PNNNNSTEWEKVKLLFEDLGTGQ. N-linked (GlcNAc...) asparagine glycosylation is found at Asn166 and Asn167. Residues 186–206 form a helical membrane-spanning segment; the sequence is GLAALSFSISSLTLIGMLAAI. Over 207-302 the chain is Cytoplasmic; it reads TYTAYGMSAL…KFCGALRPLK (96 aa). Residues 229–232 carry the YERL motif; mediates interaction with adapter protein complex 2 and is essential for its function in clathrin-mediated endocytosis of INSR motif; it reads YERL. Phosphothreonine is present on Thr235. Positions 291–294 match the WTKF motif; mediates interaction with adapter protein complex 2 and is essential for its function in clathrin-mediated endocytosis of INSR motif; sequence WTKF. The helical transmembrane segment at 303 to 323 threads the bilayer; that stretch reads IIWGIFFILVALLFVISLFLS. The Extracellular segment spans residues 324–361; sequence NLDKALHSAGIDSGFIIFGTNLSNPLNMLLPLLQTVFP. Residue Asn344 is glycosylated (N-linked (GlcNAc...) asparagine). Residues 362 to 382 traverse the membrane as a helical segment; the sequence is LDYILITIIIMYFIFTSMAGI. The Cytoplasmic portion of the chain corresponds to 383 to 405; it reads RNIGIWFFWIRLYKIRRGRTRPQ. A helical membrane pass occupies residues 406-426; the sequence is ALLFLCMILLLIVLHTSYMIY. The Extracellular portion of the chain corresponds to 427 to 483; sequence SLAPQYVMYGSQNYLIESNITSDAHKGNSTLAVPKRCDADAPKDQCTVTRTYIFLHK. 2 N-linked (GlcNAc...) asparagine glycosylation sites follow: Asn445 and Asn454. Residues 484-504 traverse the membrane as a helical segment; it reads FWFFSAAYYFGNWAFLVVFLI. Over 505-537 the chain is Cytoplasmic; it reads GLIVSCCKGKKSVIEGVDEDSDLSDDEPSAYSA. A phosphoserine mark is found at Ser525 and Ser528.

This sequence belongs to the LIMR family. LMBRD1 subfamily. Interacts with ABCD4; this interaction induces the translocation of ABCD4 from the endoplasmic reticulum to the lysosome. Interacts with ABCD4 and MMACHC; this interaction ensures the transport of cobalamin from the lysosome to the cytoplasm. Interacts with INSR, adapter protein complex 2 and clathrin heavy chain. In terms of processing, N-glycosylated.

Its subcellular location is the endoplasmic reticulum membrane. It localises to the lysosome membrane. It is found in the cell membrane. The protein resides in the cytoplasmic vesicle. The protein localises to the clathrin-coated vesicle. In terms of biological role, lysosomal membrane chaperone required to export cobalamin (vitamin B12) from the lysosome to the cytosol, allowing its conversion to cofactors. Targets ABCD4 transporter from the endoplasmic reticulum to the lysosome. Then forms a complex with lysosomal ABCD4 and cytoplasmic MMACHC to transport cobalamin across the lysosomal membrane. Acts as an adapter protein which plays an important role in mediating and regulating the internalization of the insulin receptor (INSR). Involved in clathrin-mediated endocytosis of INSR via its interaction with adapter protein complex 2. Essential for the initiation of gastrulation and early formation of mesoderm structures during embryogenesis. The sequence is that of Lysosomal cobalamin transport escort protein LMBD1 from Mus musculus (Mouse).